The chain runs to 934 residues: 2-oxoglutarate dehydrogenase E1 component (934 aa).

The protein belongs to the alpha-ketoglutarate dehydrogenase family. In terms of assembly, homodimer. Part of the 2-oxoglutarate dehydrogenase (OGDH) complex composed of E1 (2-oxoglutarate dehydrogenase), E2 (dihydrolipoamide succinyltransferase) and E3 (dihydrolipoamide dehydrogenase); the complex contains multiple copies of the three enzymatic components (E1, E2 and E3). Thiamine diphosphate is required as a cofactor.

The enzyme catalyses N(6)-[(R)-lipoyl]-L-lysyl-[protein] + 2-oxoglutarate + H(+) = N(6)-[(R)-S(8)-succinyldihydrolipoyl]-L-lysyl-[protein] + CO2. In terms of biological role, E1 component of the 2-oxoglutarate dehydrogenase (OGDH) complex which catalyzes the decarboxylation of 2-oxoglutarate, the first step in the conversion of 2-oxoglutarate to succinyl-CoA and CO(2). The chain is 2-oxoglutarate dehydrogenase E1 component from Staphylococcus epidermidis (strain ATCC 35984 / DSM 28319 / BCRC 17069 / CCUG 31568 / BM 3577 / RP62A).